Here is a 341-residue protein sequence, read N- to C-terminus: MLTYALEQILLGKHLTRTVAEEAMGEIMDGKATPAQIGAFLASLRLKGEQVEEIIGFAKAMRARAMNFPIELPGLVDTCGTGGDGSHTFNISTASAVVAAADGVRIAKHGNRAVSSKSGSADVLEALGVPVNLSPKDAADCLRATNLCFLFAPLYHQAMKHAAGPRKELAIRTVFNLLGPLTNPAGASHQLMGVYDAKLLPNVAAVLHELDVKRALVVAGSDGLDELTVTGTSHIAELRDGRILTYEIEPEQFGLRRHEKDALRGGDANENAKIIHDVFSGARGAARDIVLLNAGAILYLADRVSSIETGVIRAAELIDGGLVMRKLEHVRHIAGGMIHAS.

5-phospho-alpha-D-ribose 1-diphosphate contacts are provided by residues Gly-80, 83–84, Thr-88, 90–93, 108–116, and Ser-120; these read GD, NIST, and KHGNRAVSS. Residue Gly-80 participates in anthranilate binding. Ser-92 contacts Mg(2+). Asn-111 serves as a coordination point for anthranilate. Residue Arg-166 participates in anthranilate binding. Positions 225 and 226 each coordinate Mg(2+).

Belongs to the anthranilate phosphoribosyltransferase family. Homodimer. Mg(2+) serves as cofactor.

It carries out the reaction N-(5-phospho-beta-D-ribosyl)anthranilate + diphosphate = 5-phospho-alpha-D-ribose 1-diphosphate + anthranilate. The protein operates within amino-acid biosynthesis; L-tryptophan biosynthesis; L-tryptophan from chorismate: step 2/5. In terms of biological role, catalyzes the transfer of the phosphoribosyl group of 5-phosphorylribose-1-pyrophosphate (PRPP) to anthranilate to yield N-(5'-phosphoribosyl)-anthranilate (PRA). This chain is Anthranilate phosphoribosyltransferase, found in Brevibacillus brevis (strain 47 / JCM 6285 / NBRC 100599).